The following is a 155-amino-acid chain: MRLRLIAVGSRMPKWVEEGWHEYAKRLPTELSLELVEIPLNTRGKNADVARLIRQEGEAMLSKVQPGERIVTLEVHGKPWSTEQLATELDRWRLDARTVNLMVGGPEGLAPEVCARAEQRWSLSPLTLPHPLVRILIGEQIYRAWTVLSGHPYHK.

S-adenosyl-L-methionine contacts are provided by residues Leu73, Gly104, and 123-128 (LSPLTL).

This sequence belongs to the RNA methyltransferase RlmH family. In terms of assembly, homodimer.

The protein resides in the cytoplasm. The enzyme catalyses pseudouridine(1915) in 23S rRNA + S-adenosyl-L-methionine = N(3)-methylpseudouridine(1915) in 23S rRNA + S-adenosyl-L-homocysteine + H(+). Specifically methylates the pseudouridine at position 1915 (m3Psi1915) in 23S rRNA. The polypeptide is Ribosomal RNA large subunit methyltransferase H (Pseudomonas putida (strain GB-1)).